A 148-amino-acid chain; its full sequence is MPHFLILNGPNVNRLGSREPEVFGRQTLTDIETDLFQFAEALHIQLTFFQSNHEGDLIDAIHEAEEQYSGIVLNPGALSHYSYAIRDAVSSISLPVVEVHLSNLYAREEFRHQSVIAPVAKGQIVGLGAEGYKLAVRYLLSQQGGESR.

The substrate site is built by N74, H80, and D87. H100 acts as the Proton donor in catalysis. Residues 101-102 (LS) and R111 each bind substrate.

The protein belongs to the type-II 3-dehydroquinase family. As to quaternary structure, homododecamer.

The catalysed reaction is 3-dehydroquinate = 3-dehydroshikimate + H2O. It functions in the pathway metabolic intermediate biosynthesis; chorismate biosynthesis; chorismate from D-erythrose 4-phosphate and phosphoenolpyruvate: step 3/7. This chain is 3-dehydroquinate dehydratase (yqhS), found in Bacillus subtilis (strain 168).